Reading from the N-terminus, the 364-residue chain is Tyrosyl-DNA phosphodiesterase 2 (364 aa).

Met-1 is modified (N-acetylmethionine). Low complexity predominate over residues 1 to 10; it reads MERNSGPEAG. A disordered region spans residues 1 to 21; that stretch reads MERNSGPEAGPEAELEEGEPE. Lys-23 participates in a covalent cross-link: Glycyl lysine isopeptide (Lys-Gly) (interchain with G-Cter in SUMO2). The segment at 68-108 is disordered; the sequence is ESASESRPESLSEPGSCVDLTKEETNDSISSKTSTSEDKSV. Phosphothreonine; by ACVR1B occurs at positions 88 and 92. Residue Ser-95 is modified to Phosphoserine. An interaction with 5' end of substrate DNA region spans residues 122-126; that stretch reads NIDGL. Mg(2+) contacts are provided by Asp-124 and Glu-154. The segment at 228-233 is interaction with 5' end of substrate DNA; sequence HLESTR. Asp-264 acts as the Proton donor/acceptor in catalysis. An interaction with 5' end of substrate DNA region spans residues 266–268; sequence NLR.

The protein belongs to the CCR4/nocturin family. In terms of assembly, interacts with TRAF2, TRAF3, TRAF5, TRAF6, TNFRSF8/CD30, TNFRSF5/CD40, TNFRSF1B/TNF-R75, ETS1, ETS2, FLI1, SMAD3 and ACVR1B/ALK4. It depends on Mg(2+) as a cofactor. Requires Mn(2+) as cofactor. Post-translationally, ubiquitinated by TRAF6.

It is found in the nucleus. The protein localises to the PML body. The protein resides in the nucleolus. It localises to the cytoplasm. Functionally, DNA repair enzyme that can remove a variety of covalent adducts from DNA through hydrolysis of a 5'-phosphodiester bond, giving rise to DNA with a free 5' phosphate. Catalyzes the hydrolysis of dead-end complexes between DNA and the topoisomerase 2 (TOP2) active site tyrosine residue. The 5'-tyrosyl DNA phosphodiesterase activity can enable the repair of TOP2-induced DNA double-strand breaks/DSBs without the need for nuclease activity, creating a 'clean' DSB with 5'-phosphate termini that are ready for ligation. Thereby, protects the transcription of many genes involved in neurological development and maintenance from the abortive activity of TOP2. Hydrolyzes 5'-phosphoglycolates on protruding 5' ends on DSBs due to DNA damage by radiation and free radicals. Has preference for single-stranded DNA or duplex DNA with a 4 base pair overhang as substrate. Also has 3'-tyrosyl DNA phosphodiesterase activity, but less efficiently and much slower than TDP1. Constitutes the major if not only 5'-tyrosyl-DNA phosphodiesterase in cells. Also acts as an adapter by participating in the specific activation of MAP3K7/TAK1 in response to TGF-beta: associates with components of the TGF-beta receptor-TRAF6-TAK1 signaling module and promotes their ubiquitination dependent complex formation. Involved in non-canonical TGF-beta induced signaling routes. May also act as a negative regulator of ETS1 and may inhibit NF-kappa-B activation. Acts as a regulator of ribosome biogenesis following stress. The chain is Tyrosyl-DNA phosphodiesterase 2 (TDP2) from Bos taurus (Bovine).